The sequence spans 259 residues: Oxaloacetate tautomerase FMP41, mitochondrial (259 aa).

The Mg(2+) site is built by Glu-87, Glu-89, and Asp-121.

Belongs to the FAH family. Mg(2+) is required as a cofactor. It depends on Mn(2+) as a cofactor.

Its subcellular location is the mitochondrion. It carries out the reaction oxaloacetate = enol-oxaloacetate. In terms of biological role, tautomerase that converts enol-oxaloacetate, a strong inhibitor of succinate dehydrogenase, to the physiological keto form of oxaloacetate. This chain is Oxaloacetate tautomerase FMP41, mitochondrial, found in Saccharomyces cerevisiae (strain ATCC 204508 / S288c) (Baker's yeast).